We begin with the raw amino-acid sequence, 325 residues long: Aldo-keto reductase family 1 member A1 (325 aa).

Ala-2 bears the N-acetylalanine mark. Ser-4 bears the Phosphoserine mark. NADP(+) is bound by residues 11–20 (GQKMPLIGLG), Thr-21, Trp-22, and Asp-45. The active-site Proton donor is Tyr-50. Lys-127 is modified (N6-acetyllysine; alternate). Lys-127 bears the N6-succinyllysine; alternate mark. Residue Lys-145 is modified to N6-succinyllysine. Residues Ser-162, Asn-163, Ser-211, Leu-213, Ser-215, Ser-216, Lys-263, Ser-264, Val-265, Thr-266, Arg-269, Gln-272, and Asn-273 each contribute to the NADP(+) site. Ser-211 carries the post-translational modification Phosphoserine.

The protein belongs to the aldo/keto reductase family. Monomer.

The protein localises to the cytoplasm. The protein resides in the cytosol. Its subcellular location is the apical cell membrane. The catalysed reaction is a primary alcohol + NADP(+) = an aldehyde + NADPH + H(+). It catalyses the reaction glycerol + NADP(+) = D-glyceraldehyde + NADPH + H(+). It carries out the reaction glycerol + NADP(+) = L-glyceraldehyde + NADPH + H(+). The enzyme catalyses L-gulonate + NADP(+) = aldehydo-D-glucuronate + NADPH + H(+). The catalysed reaction is L-gulono-1,4-lactone + NADP(+) = D-glucurono-3,6-lactone + NADPH + H(+). It catalyses the reaction allyl alcohol + NADP(+) = acrolein + NADPH + H(+). It carries out the reaction hydroxyacetone + NADP(+) = methylglyoxal + NADPH + H(+). The enzyme catalyses 3-deoxyfructose + NADP(+) = 3-deoxyglucosone + NADPH + H(+). The catalysed reaction is (R)-mevalonate + NADP(+) = (R)-mevaldate + NADPH + H(+). It catalyses the reaction pyridine 3-methanol + NADP(+) = pyridine-3-carbaldehyde + NADPH + H(+). It carries out the reaction S-nitroso-CoA + NADPH + H(+) = sulfinamide-CoA + NADP(+). The enzyme catalyses S-nitrosoglutathione + NADPH + H(+) = S-(hydroxysulfenamide)glutathione + NADP(+). Catalyzes the NADPH-dependent reduction of a wide variety of carbonyl-containing compounds to their corresponding alcohols. Displays enzymatic activity towards endogenous metabolites such as aromatic and aliphatic aldehydes, ketones, monosaccharides and bile acids, with a preference for negatively charged substrates, such as glucuronate and succinic semialdehyde. Plays an important role in ascorbic acid biosynthesis by catalyzing the reduction of D-glucuronic acid and D-glucurono-gamma-lactone. Functions as a detoxifiying enzyme by reducing a range of toxic aldehydes. Reduces methylglyoxal and 3-deoxyglucosone, which are present at elevated levels under hyperglycemic conditions and are cytotoxic. Involved also in the detoxification of lipid-derived aldehydes like acrolein. Plays a role in the activation of procarcinogens, such as polycyclic aromatic hydrocarbon trans-dihydrodiols, and in the metabolism of various xenobiotics and drugs. Also acts as an inhibitor of protein S-nitrosylation by mediating degradation of S-nitroso-coenzyme A (S-nitroso-CoA), a cofactor required to S-nitrosylate proteins. S-nitroso-CoA reductase activity is involved in reprogramming intermediary metabolism in renal proximal tubules, notably by inhibiting protein S-nitrosylation of isoform 2 of PKM (PKM2). Also acts as a S-nitroso-glutathione reductase by catalyzing the NADPH-dependent reduction of S-nitrosoglutathione. Displays no reductase activity towards retinoids. This is Aldo-keto reductase family 1 member A1 (AKR1A1) from Sus scrofa (Pig).